The primary structure comprises 175 residues: Protein tyrosine phosphatase PRL-1 (175 aa).

One can recognise a Tyrosine-protein phosphatase domain in the interval 15-172 (KPSRVLFHFL…YKRRHQGAGC (158 aa)). Residues Cys-53 and Cys-114 are joined by a disulfide bond. Asp-76 (proton donor) is an active-site residue. Residue Cys-114 is the Phosphocysteine intermediate of the active site. 116 to 120 (AGLGR) contacts substrate. At Cys-172 the chain carries Cysteine methyl ester. Cys-172 carries the S-farnesyl cysteine lipid modification. Residues 173 to 175 (VIM) constitute a propeptide, removed in mature form.

It belongs to the protein-tyrosine phosphatase family.

It is found in the cytoplasm. It localises to the mitochondrion matrix. The protein resides in the kinetoplast. The protein localises to the secreted. Its subcellular location is the extracellular exosome. It carries out the reaction O-phospho-L-tyrosyl-[protein] + H2O = L-tyrosyl-[protein] + phosphate. Its activity is regulated as follows. Activated in a reduced environment which promotes the reduction of the disulfide bond between the regulatory Cys-53 and catalytic Cys-114 residues. In terms of biological role, has protein tyrosine phosphatase activity and may act as a virulence factor to support intracellular survival in host macrophages. In Leishmania major, this protein is Protein tyrosine phosphatase PRL-1.